The sequence spans 753 residues: Polyadenylate-binding protein, cytoplasmic and nuclear (753 aa).

Positions 1-26 (MSAEVSTTPAADNTVNGTPEATNAAA) are enriched in polar residues. A disordered region spans residues 1–52 (MSAEVSTTPAADNTVNGTPEATNAAATSAPEVTAVESASPSTTPSASQPHSA). Residues 37–52 (SASPSTTPSASQPHSA) show a composition bias toward low complexity. RRM domains are found at residues 52 to 130 (ASLY…WSQR), 140 to 217 (GNVF…HHIS), 233 to 310 (TNVY…RAQK), and 336 to 460 (VNLY…LAQR). Disordered regions lie at residues 367-417 (VMRD…TEKK) and 602-645 (MGQG…REEV). Over residues 379-417 (ESEKEKEKESNKENEKEGEEKTEEKPKESEEEPKKTEKK) the composition is skewed to basic and acidic residues. Positions 605–631 (GIRGPGYGQGRGGAPVQGGPRPQGGRG) are enriched in gly residues. Positions 648–725 (TGGLTAQTLS…ALSVYDEYMK (78 aa)) constitute a PABC domain. The tract at residues 728–753 (GEGEAPAESAKPKEDAAETATEENKS) is disordered. Basic and acidic residues predominate over residues 737-753 (AKPKEDAAETATEENKS).

It belongs to the polyadenylate-binding protein type-1 family.

The protein localises to the cytoplasm. Its subcellular location is the nucleus. Functionally, binds the poly(A) tail of mRNA. Appears to be an important mediator of the multiple roles of the poly(A) tail in mRNA biogenesis, stability and translation. In the nucleus, involved in both mRNA cleavage and polyadenylation. Is also required for efficient mRNA export to the cytoplasm. Acts in concert with a poly(A)-specific nuclease (PAN) to affect poly(A) tail shortening, which may occur concomitantly with either nucleocytoplasmic mRNA transport or translational initiation. In the cytoplasm, stimulates translation initiation and regulates mRNA decay through translation termination-coupled poly(A) shortening, probably mediated by PAN. This is Polyadenylate-binding protein, cytoplasmic and nuclear (pab1) from Aspergillus fumigatus (strain ATCC MYA-4609 / CBS 101355 / FGSC A1100 / Af293) (Neosartorya fumigata).